The following is a 277-amino-acid chain: Large ribosomal subunit protein uL2c (277 aa).

Polar residues predominate over residues 1 to 11 (MNTRSYSTFTP). Disordered stretches follow at residues 1–47 (MNTR…RNNS) and 254–277 (YSALGKKSRKRNKYSDVSILRRRK).

The protein belongs to the universal ribosomal protein uL2 family. Part of the 50S ribosomal subunit.

The protein localises to the plastid. It is found in the chloroplast. The sequence is that of Large ribosomal subunit protein uL2c (rpl2) from Cryptomeria japonica (Japanese cedar).